Consider the following 301-residue polypeptide: Acetylglutamate kinase (301 aa).

Residues 72–73 (GG), Arg-94, and Asn-199 each bind substrate.

Belongs to the acetylglutamate kinase family. ArgB subfamily.

The protein localises to the cytoplasm. The enzyme catalyses N-acetyl-L-glutamate + ATP = N-acetyl-L-glutamyl 5-phosphate + ADP. It functions in the pathway amino-acid biosynthesis; L-arginine biosynthesis; N(2)-acetyl-L-ornithine from L-glutamate: step 2/4. In terms of biological role, catalyzes the ATP-dependent phosphorylation of N-acetyl-L-glutamate. The protein is Acetylglutamate kinase of Bartonella bacilliformis (strain ATCC 35685 / KC583 / Herrer 020/F12,63).